The chain runs to 217 residues: Large ribosomal subunit protein uL3 (217 aa).

The segment at 129–161 (SRGPMSHGSKNHRAPGSTGAGTTPGRIYPGKRM) is disordered. A compositionally biased stretch (low complexity) spans 142-153 (APGSTGAGTTPG).

It belongs to the universal ribosomal protein uL3 family. In terms of assembly, part of the 50S ribosomal subunit. Forms a cluster with proteins L14 and L19.

One of the primary rRNA binding proteins, it binds directly near the 3'-end of the 23S rRNA, where it nucleates assembly of the 50S subunit. The protein is Large ribosomal subunit protein uL3 of Prochlorococcus marinus subsp. pastoris (strain CCMP1986 / NIES-2087 / MED4).